A 499-amino-acid polypeptide reads, in one-letter code: Maturase K (499 aa).

Belongs to the intron maturase 2 family. MatK subfamily.

The protein resides in the plastid. Its subcellular location is the chloroplast. Its function is as follows. Usually encoded in the trnK tRNA gene intron. Probably assists in splicing its own and other chloroplast group II introns. The polypeptide is Maturase K (Gymnocladus dioicus (Kentucky coffee tree)).